A 147-amino-acid polypeptide reads, in one-letter code: 3-dehydroquinate dehydratase (147 aa).

Tyr24 serves as the catalytic Proton acceptor. Asn74, His80, and Asp87 together coordinate substrate. His100 acts as the Proton donor in catalysis. Substrate contacts are provided by residues 101–102 (LS) and Arg111.

This sequence belongs to the type-II 3-dehydroquinase family. Homododecamer.

The catalysed reaction is 3-dehydroquinate = 3-dehydroshikimate + H2O. It functions in the pathway metabolic intermediate biosynthesis; chorismate biosynthesis; chorismate from D-erythrose 4-phosphate and phosphoenolpyruvate: step 3/7. Functionally, catalyzes a trans-dehydration via an enolate intermediate. The chain is 3-dehydroquinate dehydratase from Azorhizobium caulinodans (strain ATCC 43989 / DSM 5975 / JCM 20966 / LMG 6465 / NBRC 14845 / NCIMB 13405 / ORS 571).